We begin with the raw amino-acid sequence, 452 residues long: AP-4 complex subunit mu-1 (452 aa).

The region spanning 184 to 451 (KNEVFLDVVE…LSHSDAYVIR (268 aa)) is the MHD domain.

This sequence belongs to the adaptor complexes medium subunit family. In terms of assembly, adaptor protein complex 4 (AP-4) is a heterotetramer composed of two large adaptins (epsilon-type subunit AP4E1 and beta-type subunit AP4B1), a medium adaptin (mu-type subunit AP4M1) and a small adaptin (sigma-type AP4S1). Interacts with tyrosine-based sorting signals on the cytoplasmic tail of cargo proteins such as APP, ATG9A, LAMP2 and NAGPA. Interacts with the C-terminal domain of GRID2. Interacts with GRIA1 and GRIA2; the interaction is indirect via CACNG3. Interacts with CACNG3; CACNG3 associates GRIA1 and GRIA2 with the adaptor protein complex 4 (AP-4) to target them to the somatodendritic compartment of neurons. Interacts with HOOK1 and HOOK2; the interactions are direct, mediate the interaction between FTS-Hook-FHIP (FHF) complex and AP-4 and the perinuclear distribution of AP-4.

The protein localises to the golgi apparatus. Its subcellular location is the trans-Golgi network membrane. It localises to the early endosome. Functionally, component of the adaptor protein complex 4 (AP-4). Adaptor protein complexes are vesicle coat components involved both in vesicle formation and cargo selection. They control the vesicular transport of proteins in different trafficking pathways. AP-4 forms a non clathrin-associated coat on vesicles departing the trans-Golgi network (TGN) and may be involved in the targeting of proteins from the trans-Golgi network (TGN) to the endosomal-lysosomal system. It is also involved in protein sorting to the basolateral membrane in epithelial cells and the proper asymmetric localization of somatodendritic proteins in neurons. Within AP-4, the mu-type subunit AP4M1 is directly involved in the recognition and binding of tyrosine-based sorting signals found in the cytoplasmic part of cargos. The adaptor protein complex 4 (AP-4) may also recognize other types of sorting signal. In Canis lupus familiaris (Dog), this protein is AP-4 complex subunit mu-1.